Consider the following 332-residue polypeptide: 3'(2'),5'-bisphosphate nucleotidase (332 aa).

The active-site Proton acceptor is aspartate 49. 4 residues coordinate Mg(2+): glutamate 73, aspartate 129, isoleucine 131, and aspartate 132. Threonine 134 serves as the catalytic Proton acceptor. Adenosine 3',5'-bisphosphate-binding residues include threonine 134, serine 245, lysine 248, arginine 262, and aspartate 274. 4 residues coordinate AMP: serine 245, lysine 248, arginine 262, and aspartate 274. Mg(2+) is bound at residue aspartate 274.

Belongs to the inositol monophosphatase superfamily. Mg(2+) serves as cofactor.

It catalyses the reaction 3'-phosphoadenylyl sulfate + H2O = adenosine 5'-phosphosulfate + phosphate. It carries out the reaction adenosine 3',5'-bisphosphate + H2O = AMP + phosphate. The enzyme catalyses adenosine 2',5'-bisphosphate + H2O = AMP + phosphate. The catalysed reaction is 1D-myo-inositol 1,4-bisphosphate + H2O = 1D-myo-inositol 4-phosphate + phosphate. It catalyses the reaction 1D-myo-inositol 1,3,4-trisphosphate + H2O = 1D-myo-inositol 3,4-bisphosphate + phosphate. Phosphatase that converts adenosine 3'-phosphate 5'-phosphosulfate (PAPS) to adenosine 5'-phosphosulfate (APS) and 3'(2')-phosphoadenosine 5'-phosphate (PAP) to AMP. Is also able to hydrolyze inositol 1,4-bisphosphate and inositol 1,3,4-trisphosphate. In Dictyostelium discoideum (Social amoeba), this protein is 3'(2'),5'-bisphosphate nucleotidase.